Consider the following 347-residue polypeptide: Heat-inducible transcription repressor HrcA (347 aa).

This sequence belongs to the HrcA family.

Negative regulator of class I heat shock genes (grpE-dnaK-dnaJ and groELS operons). Prevents heat-shock induction of these operons. This Laribacter hongkongensis (strain HLHK9) protein is Heat-inducible transcription repressor HrcA.